The chain runs to 819 residues: DNA topoisomerase 4 subunit A (819 aa).

In terms of domain architecture, Topo IIA-type catalytic spans 30 to 496; sequence LPDIRDGLKP…QIIEIDTASL (467 aa). Tyrosine 118 acts as the O-(5'-phospho-DNA)-tyrosine intermediate in catalysis.

The protein belongs to the type II topoisomerase GyrA/ParC subunit family. ParC type 2 subfamily. Heterotetramer composed of ParC and ParE.

It localises to the cell membrane. It catalyses the reaction ATP-dependent breakage, passage and rejoining of double-stranded DNA.. Topoisomerase IV is essential for chromosome segregation. It relaxes supercoiled DNA. Performs the decatenation events required during the replication of a circular DNA molecule. In Streptococcus pyogenes serotype M3 (strain SSI-1), this protein is DNA topoisomerase 4 subunit A.